Reading from the N-terminus, the 180-residue chain is Crossover junction endodeoxyribonuclease RuvC (180 aa).

Residues Asp-7, Glu-66, and Asp-138 contribute to the active site. Mg(2+) contacts are provided by Asp-7, Glu-66, and Asp-138.

Belongs to the RuvC family. In terms of assembly, homodimer which binds Holliday junction (HJ) DNA. The HJ becomes 2-fold symmetrical on binding to RuvC with unstacked arms; it has a different conformation from HJ DNA in complex with RuvA. In the full resolvosome a probable DNA-RuvA(4)-RuvB(12)-RuvC(2) complex forms which resolves the HJ. The cofactor is Mg(2+).

Its subcellular location is the cytoplasm. It carries out the reaction Endonucleolytic cleavage at a junction such as a reciprocal single-stranded crossover between two homologous DNA duplexes (Holliday junction).. The RuvA-RuvB-RuvC complex processes Holliday junction (HJ) DNA during genetic recombination and DNA repair. Endonuclease that resolves HJ intermediates. Cleaves cruciform DNA by making single-stranded nicks across the HJ at symmetrical positions within the homologous arms, yielding a 5'-phosphate and a 3'-hydroxyl group; requires a central core of homology in the junction. The consensus cleavage sequence is 5'-(A/T)TT(C/G)-3'. Cleavage occurs on the 3'-side of the TT dinucleotide at the point of strand exchange. HJ branch migration catalyzed by RuvA-RuvB allows RuvC to scan DNA until it finds its consensus sequence, where it cleaves and resolves the cruciform DNA. The chain is Crossover junction endodeoxyribonuclease RuvC from Burkholderia lata (strain ATCC 17760 / DSM 23089 / LMG 22485 / NCIMB 9086 / R18194 / 383).